The primary structure comprises 112 residues: Mu-ctenitoxin-Pn1a (112 aa).

An N-terminal signal peptide occupies residues 1 to 19; that stretch reads MKLLGIFLVASFAFVLSFG. A propeptide spanning residues 20 to 33 is cleaved from the precursor; sequence EEMIEGENPLEDQR. Disulfide bonds link Cys-39-Cys-56, Cys-46-Cys-62, Cys-53-Cys-85, Cys-55-Cys-73, Cys-64-Cys-71, Cys-91-Cys-106, and Cys-102-Cys-110. Gly-111 is subject to Glycine amide.

The protein belongs to the neurotoxin 04 (omega-agtx) family. 02 (Tx1) subfamily. In terms of processing, contains 7 disulfide bonds. As to expression, expressed by the venom gland.

The protein localises to the secreted. Its function is as follows. Reversible inhibitor of neuronal sodium channels (Nav1.2/ SCN2A) that binds in proximity to site 1 and displays increasing affinity as the membrane potential is depolarized. Induces excitatory symptoms and spastic paralysis in mice. The sequence is that of Mu-ctenitoxin-Pn1a from Phoneutria nigriventer (Brazilian armed spider).